A 206-amino-acid polypeptide reads, in one-letter code: GDT1-like protein sll0615 (206 aa).

5 helical membrane passes run 36 to 56, 58 to 78, 114 to 134, 151 to 171, and 185 to 205; these read WVLV…VLMG, IFTF…FLIF, IVPR…VAEW, AWGV…IAVM, and VTLI…WTKI.

Belongs to the GDT1 family.

The protein resides in the cell membrane. The polypeptide is GDT1-like protein sll0615 (Synechocystis sp. (strain ATCC 27184 / PCC 6803 / Kazusa)).